The following is a 96-amino-acid chain: UPF0235 protein YpsIP31758_0827 (96 aa).

This sequence belongs to the UPF0235 family.

This chain is UPF0235 protein YpsIP31758_0827, found in Yersinia pseudotuberculosis serotype O:1b (strain IP 31758).